The following is a 524-amino-acid chain: uncharacterized protein (524 aa).

The signal sequence occupies residues 1 to 26 (MLKIDMWFKLKSLGFSLISLQALLAS). Residue cysteine 27 is the site of N-palmitoyl cysteine attachment. Cysteine 27 carries the S-diacylglycerol cysteine lipid modification. The disordered stretch occupies residues 37 to 68 (IEEKNDSTTDNNATPFKDEQSDQGTEVNQQPK). Positions 58–68 (DQGTEVNQQPK) are enriched in polar residues.

The protein belongs to the MG067/MG068/MG395 family.

Its subcellular location is the cell membrane. This is an uncharacterized protein from Mycoplasma genitalium (strain ATCC 33530 / DSM 19775 / NCTC 10195 / G37) (Mycoplasmoides genitalium).